Consider the following 399-residue polypeptide: Lipoyl synthase, mitochondrial (399 aa).

Residues 1-30 (MRAVLELTRRRARNARFARARAVVGARARA) constitute a mitochondrion transit peptide. The span at 31–41 (ADAQELRDDSK) shows a compositional bias: basic and acidic residues. A disordered region spans residues 31 to 58 (ADAQELRDDSKGGSSVDKATSTAAEARE). Positions 131, 136, 142, 162, 166, 169, and 375 each coordinate [4Fe-4S] cluster. One can recognise a Radical SAM core domain in the interval 145 to 364 (GGDGKTATAT…QEIAEEMGFL (220 aa)).

It belongs to the radical SAM superfamily. Lipoyl synthase family. The cofactor is [4Fe-4S] cluster.

The protein resides in the mitochondrion. The enzyme catalyses [[Fe-S] cluster scaffold protein carrying a second [4Fe-4S](2+) cluster] + N(6)-octanoyl-L-lysyl-[protein] + 2 oxidized [2Fe-2S]-[ferredoxin] + 2 S-adenosyl-L-methionine + 4 H(+) = [[Fe-S] cluster scaffold protein] + N(6)-[(R)-dihydrolipoyl]-L-lysyl-[protein] + 4 Fe(3+) + 2 hydrogen sulfide + 2 5'-deoxyadenosine + 2 L-methionine + 2 reduced [2Fe-2S]-[ferredoxin]. The protein operates within protein modification; protein lipoylation via endogenous pathway; protein N(6)-(lipoyl)lysine from octanoyl-[acyl-carrier-protein]: step 2/2. Functionally, catalyzes the radical-mediated insertion of two sulfur atoms into the C-6 and C-8 positions of the octanoyl moiety bound to the lipoyl domains of lipoate-dependent enzymes, thereby converting the octanoylated domains into lipoylated derivatives. The sequence is that of Lipoyl synthase, mitochondrial from Ostreococcus lucimarinus (strain CCE9901).